Reading from the N-terminus, the 204-residue chain is Imidazole glycerol phosphate synthase subunit HisH 1 (204 aa).

One can recognise a Glutamine amidotransferase type-1 domain in the interval 5–204 (KVVIIDTGCA…AKLIQNFLEL (200 aa)). Cysteine 80 functions as the Nucleophile in the catalytic mechanism. Active-site residues include histidine 186 and glutamate 188.

As to quaternary structure, heterodimer of HisH and HisF.

It is found in the cytoplasm. The enzyme catalyses 5-[(5-phospho-1-deoxy-D-ribulos-1-ylimino)methylamino]-1-(5-phospho-beta-D-ribosyl)imidazole-4-carboxamide + L-glutamine = D-erythro-1-(imidazol-4-yl)glycerol 3-phosphate + 5-amino-1-(5-phospho-beta-D-ribosyl)imidazole-4-carboxamide + L-glutamate + H(+). It catalyses the reaction L-glutamine + H2O = L-glutamate + NH4(+). It functions in the pathway amino-acid biosynthesis; L-histidine biosynthesis; L-histidine from 5-phospho-alpha-D-ribose 1-diphosphate: step 5/9. IGPS catalyzes the conversion of PRFAR and glutamine to IGP, AICAR and glutamate. The HisH subunit provides the glutamine amidotransferase activity that produces the ammonia necessary to HisF for the synthesis of IGP and AICAR. The sequence is that of Imidazole glycerol phosphate synthase subunit HisH 1 (hisH1) from Vibrio vulnificus (strain YJ016).